Here is a 279-residue protein sequence, read N- to C-terminus: Bifunctional protein FolD (279 aa).

NADP(+)-binding positions include 166–168 (GRS) and Ser191.

Belongs to the tetrahydrofolate dehydrogenase/cyclohydrolase family. As to quaternary structure, homodimer.

It catalyses the reaction (6R)-5,10-methylene-5,6,7,8-tetrahydrofolate + NADP(+) = (6R)-5,10-methenyltetrahydrofolate + NADPH. The enzyme catalyses (6R)-5,10-methenyltetrahydrofolate + H2O = (6R)-10-formyltetrahydrofolate + H(+). It participates in one-carbon metabolism; tetrahydrofolate interconversion. Its function is as follows. Catalyzes the oxidation of 5,10-methylenetetrahydrofolate to 5,10-methenyltetrahydrofolate and then the hydrolysis of 5,10-methenyltetrahydrofolate to 10-formyltetrahydrofolate. The protein is Bifunctional protein FolD of Shouchella clausii (strain KSM-K16) (Alkalihalobacillus clausii).